A 728-amino-acid chain; its full sequence is Lanosterol synthase (728 aa).

A PFTB 1 repeat occupies 117 to 159 (RVEMIRYIVNTAHPVDGGWGLHSVDKSTCFGTTMNYVCLRLLG). The active-site Proton donor is Asp450. 2 PFTB repeats span residues 561–602 (ISSA…HTVG) and 611–657 (VKKG…ALIG).

This sequence belongs to the terpene cyclase/mutase family.

Its subcellular location is the lipid droplet. It is found in the endoplasmic reticulum membrane. It carries out the reaction (S)-2,3-epoxysqualene = lanosterol. The protein operates within terpene metabolism; lanosterol biosynthesis; lanosterol from farnesyl diphosphate: step 3/3. In terms of biological role, lanosterol synthase; part of the third module of ergosterol biosynthesis pathway that includes the late steps of the pathway. ERG7 catalyzes the cyclization of (S)-2,3 oxidosqualene to lanosterol, a reaction that forms the sterol core. The third module or late pathway involves the ergosterol synthesis itself through consecutive reactions that mainly occur in the endoplasmic reticulum (ER) membrane. Firstly, the squalene synthase ERG9 catalyzes the condensation of 2 farnesyl pyrophosphate moieties to form squalene, which is the precursor of all steroids. Squalene synthase is crucial for balancing the incorporation of farnesyl diphosphate (FPP) into sterol and nonsterol isoprene synthesis. Secondly, the squalene epoxidase ERG1 catalyzes the stereospecific oxidation of squalene to (S)-2,3-epoxysqualene, which is considered to be a rate-limiting enzyme in steroid biosynthesis. Then, the lanosterol synthase ERG7 catalyzes the cyclization of (S)-2,3 oxidosqualene to lanosterol, a reaction that forms the sterol core. In the next steps, lanosterol is transformed to zymosterol through a complex process involving various demethylation, reduction and desaturation reactions. The lanosterol 14-alpha-demethylase ERG11 (also known as CYP51) catalyzes C14-demethylation of lanosterol to produce 4,4'-dimethyl cholesta-8,14,24-triene-3-beta-ol, which is critical for ergosterol biosynthesis. The C-14 reductase ERG24 reduces the C14=C15 double bond of 4,4-dimethyl-cholesta-8,14,24-trienol to produce 4,4-dimethyl-cholesta-8,24-dienol. 4,4-dimethyl-cholesta-8,24-dienol is substrate of the C-4 demethylation complex ERG25-ERG26-ERG27 in which ERG25 catalyzes the three-step monooxygenation required for the demethylation of 4,4-dimethyl and 4alpha-methylsterols, ERG26 catalyzes the oxidative decarboxylation that results in a reduction of the 3-beta-hydroxy group at the C-3 carbon to an oxo group, and ERG27 is responsible for the reduction of the keto group on the C-3. ERG28 has a role as a scaffold to help anchor ERG25, ERG26 and ERG27 to the endoplasmic reticulum and ERG29 regulates the activity of the iron-containing C4-methylsterol oxidase ERG25. Then, the sterol 24-C-methyltransferase ERG6 catalyzes the methyl transfer from S-adenosyl-methionine to the C-24 of zymosterol to form fecosterol. The C-8 sterol isomerase ERG2 catalyzes the reaction which results in unsaturation at C-7 in the B ring of sterols and thus converts fecosterol to episterol. The sterol-C5-desaturase ERG3 then catalyzes the introduction of a C-5 double bond in the B ring to produce 5-dehydroepisterol. The C-22 sterol desaturase ERG5 further converts 5-dehydroepisterol into ergosta-5,7,22,24(28)-tetraen-3beta-ol by forming the C-22(23) double bond in the sterol side chain. Finally, ergosta-5,7,22,24(28)-tetraen-3beta-ol is substrate of the C-24(28) sterol reductase ERG4 to produce ergosterol. The chain is Lanosterol synthase from Candida albicans (strain SC5314 / ATCC MYA-2876) (Yeast).